A 1560-amino-acid polypeptide reads, in one-letter code: MDDEDGRCLLDVICDPQALNDFLHGSEKLDSDDLLDNPGEAQSAFYEGPGLHVQEASGNHLNPEPNQPAPSVDLDFLEDDILGSPATGGGGGGSGGADQPCDILQQSLQEANITEQTLEAEAELDLGPFQLPTLQPADGGAGPTGAGGAAAVAAGPQALFPGSTDLLGLQGPPTVLTHQALVPPQDVVNKALSVQPFLQPVGLGNVTLQPIPGLQGLPNGSPGGATAATLGLAPIQVVGQPVMALNTPTSQLLAKQVPVSGYLASAAGPSEPVTLASAGVSPQGAGLVIQKNLSAAVATTLNGNSVFGGAGAASAPTGTPSGQPLAVAPGLGSSPLVPAPNVILHRTPTPIQPKPAGVLPPKLYQLTPKPFAPAGATLTIQGEPGALPQQPKAPQNLTFMAAGKAGQNVVLSGFPAPALQANVFKQPPATTTGAAPPQPPGALSKPMSVHLLNQGSSIVIPAQHMLPGQNQFLLPGAPAVQLPQQLSALPANVGGQILAAAAPHTGGQLIANPILTNQNLAGPLSLGPVLAPHSGAHSAHILSAAPIQVGQPALFQMPVSLAAGSLPTQSQPAPAGPAATTVLQGVTLPPSAVAMLNTPDGLVQPATPAAATGEAAPVLTVQPAPQAPPAVSTPLPLGLQQPQAQQPPQAPTPQAAAPPQATTPQPSPGLASSPEKIVLGQPPSATPTAILTQDSLQMFLPQERSQQPLSAEGPHLSVPASVIVSAPPPAQDPAPATPVAKGAGLGPQAPDSQASPAPAPQIPAAAPLKGPGPSSSPSLPHQAPLGDSPHLPSPHPTRPPSRPPSRPQSVSRPPSEPPLHPCPPPQAPPTLPGIFVIQNQLGVPPPASNPAPTAPGPPQPPLRPQSQPPEGPLPPAPHLPPSSTSSAVASSSETSSRLPAPTPSDFQLQFPPSQGPHKSPTPPPTLHLVPEPAAPPPPPPRTFQMVTTPFPALPQPKALLERFHQVPSGIILQNKAGGAPAAPQTSTSLGPLTSPAASVLVSGQAPSGTPTAPSHAPAPAPMAATGLPPLLPAENKAFASNLPTLNVAKAASSGPGKPSGLQYESKLSGLKKPPTLQPSKEACFLEHLHKHQGSVLHPDYKTAFPSFEDALHRLLPYHVYQGALPSPSDYHKVDEEFETVSTQLLKRTQAMLNKYRLLLLEESRRVSPSAEMVMIDRMFIQEEKTTLALDKQLAKEKPDEYVSSSRSLGLPIAASSEGHRLPGHGPLSSSAPGASTQPPPHLPTKLVIRHGGAGGSPSVTWARASSSLSSSSSSSSAASSLDADEDGPMPSRNRPPIKTYEARSRIGLKLKIKQEAGLSKVVHNTALDPVHQPPPPPATLKVAEPPPRPPPPPPPTGQMNGTVDHPPPAAPERKPLGTAPHCPRLPLRKTYRENVGGPGAPEGTPAGRARGGSPAPLPAKVDEATSGLIRELAAVEDELYQRMLKGPPPEPAASAAQGTGDPDWEAPGLPPAKRRKSESPDVDQASFSSDSPQDDTLTEHLQSAIDSILNLQQAPGRTPAPSYPHAASAGTPASPPPLHRPEAYPPSSHNGGLGARTLTR.

Disordered regions lie at residues 53-99, 624-688, 723-949, 974-1028, 1049-1075, and 1215-1300; these read VQEA…GADQ, APQA…ATPT, IVSA…VTTP, NKAG…TGLP, KAASSGPGKPSGLQYESKLSGLKKPPT, and SSEG…IKTY. Over residues 86-96 the composition is skewed to gly residues; the sequence is ATGGGGGGSGG. Over residues 624–664 the composition is skewed to low complexity; the sequence is APQAPPAVSTPLPLGLQQPQAQQPPQAPTPQAAAPPQATTP. Over residues 726 to 736 the composition is skewed to pro residues; sequence APPPAQDPAPA. The segment covering 747–780 has biased composition (low complexity); sequence PQAPDSQASPAPAPQIPAAAPLKGPGPSSSPSLP. Pro residues-rich tracts occupy residues 791–806, 814–831, and 843–880; these read LPSPHPTRPPSRPPSR, PSEPPLHPCPPPQAPPTL, and VPPPASNPAPTAPGPPQPPLRPQSQPPEGPLPPAPHLP. The span at 881-896 shows a compositional bias: low complexity; it reads PSSTSSAVASSSETSS. Residue Ser-919 is modified to Phosphoserine. Residue Thr-921 is modified to Phosphothreonine. The segment covering 932–941 has biased composition (pro residues); it reads PAAPPPPPPR. Residues 1005 to 1028 are compositionally biased toward low complexity; sequence APSGTPTAPSHAPAPAPMAATGLP. The residue at position 1057 (Lys-1057) is an N6-acetyllysine. Positions 1227–1236 are enriched in polar residues; that stretch reads LSSSAPGAST. Over residues 1264–1281 the composition is skewed to low complexity; sequence ASSSLSSSSSSSSAASSL. Lys-1313 is covalently cross-linked (Glycyl lysine isopeptide (Lys-Gly) (interchain with G-Cter in SUMO2)). 2 disordered regions span residues 1324–1424 and 1440–1560; these read NTAL…VDEA and YQRM…TLTR. A compositionally biased stretch (pro residues) spans 1331-1356; sequence HQPPPPPATLKVAEPPPRPPPPPPPT. Over residues 1401-1412 the composition is skewed to low complexity; it reads PEGTPAGRARGG. Position 1413 is a phosphoserine (Ser-1413). A compositionally biased stretch (polar residues) spans 1485-1515; sequence ASFSSDSPQDDTLTEHLQSAIDSILNLQQAP.

As to quaternary structure, component of the multiprotein chromatin-remodeling complexes SWI/SNF: SWI/SNF-A (BAF), SWI/SNF-B (PBAF) and related complexes. The canonical complex contains a catalytic subunit (either SMARCA4/BRG1/BAF190A or SMARCA2/BRM/BAF190B) and at least SMARCE1, ACTL6A/BAF53, SMARCC1/BAF155, SMARCC2/BAF170, and SMARCB1/SNF5/BAF47. Other subunits specific to each of the complexes may also be present permitting several possible combinations developmentally and tissue specific. Component of the SWI/SNF (GBAF) subcomplex, which includes at least BICRA or BICRAL (mutually exclusive), BRD9, SS18, the core BAF subunits, SMARCA2/BRM, SMARCA4/BRG1/BAF190A, ACTL6A/BAF53, SMARCC1/BAF155, and SMARCD1/BAF60A. Interacts with BRD4; the interaction bridges BRD4 to the GBAF complex. In terms of tissue distribution, expressed at moderate levels in heart, brain, placenta, skeletal muscle, and pancreas, and at lower levels in lung, liver and kidney.

Its subcellular location is the nucleus. In terms of biological role, component of SWI/SNF chromatin remodeling subcomplex GBAF that carries out key enzymatic activities, changing chromatin structure by altering DNA-histone contacts within a nucleosome in an ATP-dependent manner. May play a role in BRD4-mediated gene transcription. In Homo sapiens (Human), this protein is BRD4-interacting chromatin-remodeling complex-associated protein.